Consider the following 235-residue polypeptide: MTDLKASEGDLSDYYMRLKKIFSNETRLQSREASISKRSSRVHKNILSAKEAIERQERDFGKLQKVLLNRNQELERRFTLGEALAQQLEVTRQRNADMEAQLLRHTTEGRQRSNELMECMHSLKQATGTYINHEAFPARLNGVSVVRADDGDIKLIPFSLDGNDADGLHTLWRSLHTRTDNASKWRKLISDQEVAGASPVTPSGSERPKATSKHSNFMPTSIIEIDLTSPTNDAS.

Positions 44–106 (KNILSAKEAI…DMEAQLLRHT (63 aa)) form a coiled coil. Residues 193 to 216 (EVAGASPVTPSGSERPKATSKHSN) are disordered.

Belongs to the SPC25 family. Component of the Ndc80 complex, which is composed of Ndc80, Nuf2 and Spc25.

It localises to the nucleus. It is found in the chromosome. The protein localises to the centromere. The protein resides in the kinetochore. Its function is as follows. Acts as a component of the essential kinetochore-associated Ndc80 complex, which is required for chromosome segregation and spindle checkpoint activity during meiosis and mitosis. Required for kinetochore integrity and the organization of stable microtubule binding sites in the outer plate of the kinetochore. Participates in SAC signaling that responds specifically to disruptions in spindle microtubule dynamics. The NDC80 complex synergistically enhances the affinity of the SKA1 complex for microtubules and may allow the NDC80 complex to track depolymerizing microtubules. This chain is Kinetochore protein Spc25, found in Drosophila pseudoobscura pseudoobscura (Fruit fly).